The following is a 195-amino-acid chain: Guanylate kinase (195 aa).

A Guanylate kinase-like domain is found at 10 to 189 (GRLIVFSAPS…TVDAVATRIA (180 aa)). 17-24 (APSGTGKS) provides a ligand contact to ATP.

It belongs to the guanylate kinase family.

Its subcellular location is the cytoplasm. It catalyses the reaction GMP + ATP = GDP + ADP. Essential for recycling GMP and indirectly, cGMP. The protein is Guanylate kinase of Chlorobaculum tepidum (strain ATCC 49652 / DSM 12025 / NBRC 103806 / TLS) (Chlorobium tepidum).